A 160-amino-acid chain; its full sequence is Cytochrome c-type biogenesis protein CcmE (160 aa).

The Cytoplasmic portion of the chain corresponds to 1 to 8 (MNPRRKKR). The chain crosses the membrane as a helical; Signal-anchor for type II membrane protein span at residues 9 to 29 (LGVVLAILFGLSATIGLIIYA). At 30–160 (LNQNMDLFYT…SQEQKQGSDQ (131 aa)) the chain is on the periplasmic side. Residues His128 and Tyr132 each coordinate heme.

The protein belongs to the CcmE/CycJ family.

Its subcellular location is the cell inner membrane. Heme chaperone required for the biogenesis of c-type cytochromes. Transiently binds heme delivered by CcmC and transfers the heme to apo-cytochromes in a process facilitated by CcmF and CcmH. The protein is Cytochrome c-type biogenesis protein CcmE of Vibrio cholerae serotype O1 (strain ATCC 39541 / Classical Ogawa 395 / O395).